The following is a 360-amino-acid chain: Aminomethyltransferase (360 aa).

The protein belongs to the GcvT family. The glycine cleavage system is composed of four proteins: P, T, L and H.

It catalyses the reaction N(6)-[(R)-S(8)-aminomethyldihydrolipoyl]-L-lysyl-[protein] + (6S)-5,6,7,8-tetrahydrofolate = N(6)-[(R)-dihydrolipoyl]-L-lysyl-[protein] + (6R)-5,10-methylene-5,6,7,8-tetrahydrofolate + NH4(+). Functionally, the glycine cleavage system catalyzes the degradation of glycine. This Pseudomonas aeruginosa (strain ATCC 15692 / DSM 22644 / CIP 104116 / JCM 14847 / LMG 12228 / 1C / PRS 101 / PAO1) protein is Aminomethyltransferase.